The primary structure comprises 817 residues: Leucine--tRNA ligase (817 aa).

The 'HIGH' region signature appears at 51-61 (PYPSGDLHVGH). Positions 588-592 (RMSKS) match the 'KMSKS' region motif. ATP is bound at residue K591.

This sequence belongs to the class-I aminoacyl-tRNA synthetase family.

Its subcellular location is the cytoplasm. It catalyses the reaction tRNA(Leu) + L-leucine + ATP = L-leucyl-tRNA(Leu) + AMP + diphosphate. In Rubrobacter xylanophilus (strain DSM 9941 / JCM 11954 / NBRC 16129 / PRD-1), this protein is Leucine--tRNA ligase.